Here is a 418-residue protein sequence, read N- to C-terminus: Tryptophan synthase beta chain (418 aa).

Over residues Met-1–Pro-18 the composition is skewed to polar residues. The segment at Met-1–Gly-23 is disordered. Lys-111 is subject to N6-(pyridoxal phosphate)lysine.

Belongs to the TrpB family. As to quaternary structure, tetramer of two alpha and two beta chains. Pyridoxal 5'-phosphate is required as a cofactor.

The enzyme catalyses (1S,2R)-1-C-(indol-3-yl)glycerol 3-phosphate + L-serine = D-glyceraldehyde 3-phosphate + L-tryptophan + H2O. It participates in amino-acid biosynthesis; L-tryptophan biosynthesis; L-tryptophan from chorismate: step 5/5. Its function is as follows. The beta subunit is responsible for the synthesis of L-tryptophan from indole and L-serine. The polypeptide is Tryptophan synthase beta chain (Parasynechococcus marenigrum (strain WH8102)).